The chain runs to 605 residues: Elongation factor 4 (605 aa).

The 183-residue stretch at 11-193 folds into the tr-type G domain; it reads EKIRNFSIIA…QIVEKVPAPT (183 aa). Residues 23–28 and 140–143 each bind GTP; these read DHGKST and NKID.

Belongs to the TRAFAC class translation factor GTPase superfamily. Classic translation factor GTPase family. LepA subfamily.

Its subcellular location is the cell membrane. The enzyme catalyses GTP + H2O = GDP + phosphate + H(+). Required for accurate and efficient protein synthesis under certain stress conditions. May act as a fidelity factor of the translation reaction, by catalyzing a one-codon backward translocation of tRNAs on improperly translocated ribosomes. Back-translocation proceeds from a post-translocation (POST) complex to a pre-translocation (PRE) complex, thus giving elongation factor G a second chance to translocate the tRNAs correctly. Binds to ribosomes in a GTP-dependent manner. The chain is Elongation factor 4 from Streptococcus pyogenes serotype M4 (strain MGAS10750).